We begin with the raw amino-acid sequence, 410 residues long: MNKEVIPVTEIPKFQSRAEEFFPIQWYKEMLNNSPVYFHEETNTWNVFQYEHVKQVLSNYDFFSSDGQRTTIFVGDNSKKKSTSPITNLTNLDPPDHRKARSLLAAAFTPRSLKNWEPRIKQIAADLVEAIQKNSTINIVDDLSSPFPSLVIADLFGVPVKDRYQFKKWVDILFQPYDQERLEEIEQEKQRAGAEYFQYLYPIVIEKRSNLSDDIISDLIQAEVDGETFTDEEIVHATMLLLGAGVETTSHAIANMFYSFLYDDKSLYSELRNNRELAPKAVEEMLRYRFHISRRDRTVKQDNELLGVKLKKGDVVIAWMSACNMDETMFENPFSVDIHRPTNKKHLTFGNGPHFCLGAPLARLEMKIILEAFLEAFSHIEPFEDFELEPHLTASATGQSLTYLPMTVYR.

Cysteine 356 serves as a coordination point for heme.

It belongs to the cytochrome P450 family. Heme is required as a cofactor.

Its subcellular location is the cytoplasm. Functionally, cytochromes P450 are a group of heme-thiolate monooxygenases. They oxidize a variety of structurally unrelated compounds, including steroids, fatty acids, and xenobiotics. This is Cytochrome P450(BM-1) (cyp106) from Priestia megaterium (strain ATCC 14581 / DSM 32 / CCUG 1817 / JCM 2506 / NBRC 15308 / NCIMB 9376 / NCTC 10342 / NRRL B-14308 / VKM B-512 / Ford 19) (Bacillus megaterium).